The sequence spans 492 residues: Zinc finger protein GLIS2 (492 aa).

The disordered stretch occupies residues 49 to 101 (VITPICSSPPPGFRYRDGDSPPFSSPPIVDLSLSPPSGTDSPSRSSLSPDRAA). A transcription activation region spans residues 69–129 (PPFSSPPIVD…SPFQFFLPLG (61 aa)). Over residues 82-97 (SPPSGTDSPSRSSLSP) the composition is skewed to low complexity. A transcription repression region spans residues 138–161 (MFMSPPKENRLSLEFTEQKQLVCQ). Residues 158 to 183 (LVCQWAKCNRLFELLQELVDHVNDFH) form a C2H2-type 1 zinc finger. Residues 192–219 (YCCHWEGCARRGRGFNARYKMLIHIRTH) form a C2H2-type 2; degenerate zinc finger. C2H2-type zinc fingers lie at residues 225–247 (HCCPTCHKSFSRLENLKIHNRSH), 253–277 (YMCPYEGCNKRYSNSSDRFKHTRTH), and 283–307 (YYCKMPGCQKRYTDPSSLRKHIKAH). Residues 423 to 444 (VENEKRPKGQRGDSSERTDGSK) are compositionally biased toward basic and acidic residues. Residues 423-450 (VENEKRPKGQRGDSSERTDGSKLRPGSI) are disordered.

This sequence belongs to the GLI C2H2-type zinc-finger protein family.

The protein localises to the nucleus speckle. It localises to the cytoplasm. Its function is as follows. Can act either as a transcription repressor or as a transcription activator, depending on the cell context. May be involved in neuron differentiation. The polypeptide is Zinc finger protein GLIS2 (glis2) (Xenopus laevis (African clawed frog)).